The sequence spans 1085 residues: Solute carrier family 12 member 4 (1085 aa).

At 1-119 (MPHFTVVPVD…RRAAKAPSMG (119 aa)) the chain is on the cytoplasmic side. At S24 the chain carries Phosphoserine. The span at 28–46 (YGERAEREDPDGHGNHRES) shows a compositional bias: basic and acidic residues. The interval 28–47 (YGERAEREDPDGHGNHRESS) is disordered. 4 positions are modified to phosphoserine: S47, S59, S81, and S88. A discontinuously helical membrane pass occupies residues 120 to 141 (TLMGVYLPCLQNIFGVILFLRL). K(+)-binding residues include N131 and I132. At 142-149 (TWMVGTAG) the chain is on the extracellular side. The chain crosses the membrane as a helical span at residues 150–172 (VLQALLIVLICCCCTLLTAISMS). Over 173-196 (AIATNGVVPAGGSYFMISRSLGPE) the chain is Cytoplasmic. A helical membrane pass occupies residues 197-225 (FGGAVGLCFYLGTTFAAAMYILGAIEILL). Position 216 (Y216) interacts with K(+). Over 226 to 248 (TYIAPPAAIFYPSGTHDTSNATL) the chain is Extracellular. Residue N245 is glycosylated (N-linked (GlcNAc...) asparagine). A run of 2 helical transmembrane segments spans residues 249-271 (NNMR…VGVK) and 272-297 (YVNK…GGIK). Residues 298 to 419 (SMFDPPVFPV…LYVVADIATS (122 aa)) are Extracellular-facing. Residues C308 and C323 are joined by a disulfide bond. 3 N-linked (GlcNAc...) asparagine glycosylation sites follow: N312, N331, and N347. A disulfide bridge connects residues C343 and C353. Residues 420 to 440 (FTVLVGIFFPSVTGIMAGSNR) traverse the membrane as a helical segment. 2 residues coordinate K(+): P429 and T432. Chloride is bound by residues G433, I434, and M435. Residues 441–450 (SGDLRDAQKS) are Cytoplasmic-facing. A helical membrane pass occupies residues 451–473 (IPVGTILAIVTTSLVYFSSVVLF). Residues 474–504 (GACIEGVVLRDKYGDGVSRNLVVGTLAWPSP) lie on the Extracellular side of the membrane. The chain crosses the membrane as a helical span at residues 505 to 531 (WVIVVGSFFSTCGAGLQSLTGAPRLLQ). At 532-554 (AIAKDNIIPFLRVFGHGKANGEP) the chain is on the cytoplasmic side. 2 consecutive transmembrane segments (helical) span residues 555–575 (TWAL…ASLD) and 576–598 (MVAP…ACAV). Y589 is a chloride binding site. Residues 599-612 (QTLLRTPNWRPRFK) lie on the Cytoplasmic side of the membrane. Transmembrane regions (helical) follow at residues 613–635 (YYHW…VSSW) and 636–651 (YYAL…IYKY). Over 652 to 1085 (IEYQGAEKEW…GGREVITIYS (434 aa)) the chain is Cytoplasmic. Residues 665–681 (IRGLSLSAARYALLRLE) form a scissor helix region. Residues L697, K699, K707, Y708, and V730 each coordinate ATP. S734 is subject to Phosphoserine. Residues G794, W795, and Y797 each contribute to the ATP site. 2 positions are modified to phosphoserine: S916 and S967. The residue at position 983 (T983) is a Phosphothreonine. S1050 carries the post-translational modification Phosphoserine.

It belongs to the SLC12A transporter family. K/Cl co-transporter subfamily. As to quaternary structure, homodimer; adopts a domain-swap conformation at the scissor helices connecting the transmembrane domain and C-terminal domain. Heterodimer with other K-Cl cotransporters. N-glycosylated. In terms of processing, phosphorylated, phosphorylation may regulate transporter activity.

Its subcellular location is the cell membrane. The catalysed reaction is K(+)(in) + chloride(in) = K(+)(out) + chloride(out). Inhibited by WNK3. Functionally, mediates electroneutral potassium-chloride cotransport when activated by cell swelling. May contribute to cell volume homeostasis in single cells. May be involved in the regulation of basolateral Cl(-) exit in NaCl absorbing epithelia. This is Solute carrier family 12 member 4 (SLC12A4) from Oryctolagus cuniculus (Rabbit).